Consider the following 215-residue polypeptide: Probable transaldolase (215 aa).

Catalysis depends on K83, which acts as the Schiff-base intermediate with substrate.

It belongs to the transaldolase family. Type 3B subfamily.

The protein resides in the cytoplasm. It carries out the reaction D-sedoheptulose 7-phosphate + D-glyceraldehyde 3-phosphate = D-erythrose 4-phosphate + beta-D-fructose 6-phosphate. The protein operates within carbohydrate degradation; pentose phosphate pathway; D-glyceraldehyde 3-phosphate and beta-D-fructose 6-phosphate from D-ribose 5-phosphate and D-xylulose 5-phosphate (non-oxidative stage): step 2/3. Transaldolase is important for the balance of metabolites in the pentose-phosphate pathway. In Methanococcus maripaludis (strain DSM 14266 / JCM 13030 / NBRC 101832 / S2 / LL), this protein is Probable transaldolase.